Here is a 405-residue protein sequence, read N- to C-terminus: Methylamine dehydrogenase heavy chain (405 aa).

An N-terminal signal peptide occupies residues 1-36 (MTTFDHPSMIRQPKPTGLAGGLVLAALMLSSSLALA).

This sequence belongs to the aromatic amine dehydrogenase heavy chain family. As to quaternary structure, tetramer of two light and two heavy chains.

It localises to the periplasm. It catalyses the reaction 2 oxidized [amicyanin] + methylamine + H2O = 2 reduced [amicyanin] + formaldehyde + NH4(+) + 2 H(+). Its function is as follows. Methylamine dehydrogenase carries out the oxidation of methylamine. Electrons are passed from methylamine dehydrogenase to amicyanin. This chain is Methylamine dehydrogenase heavy chain (mauB), found in Methylophilus methylotrophus (Bacterium W3A1).